The primary structure comprises 165 residues: MPEHLNARVEACYRQAEHFFQRSFPRPTVSFRLRGQKAGVAHLDENLLRFNPQLYRENREHFLEQTVAHEVAHLIAHQLFGPRIRPHGEEWQLIMRGIYGLPPDRCHTYAVKRRATTRYLYRCHCPEHNEFPFSPQRHTLVAKGRRYYCRRCKATLVFTGEVLRE.

The 149-residue stretch at 10 to 158 (EACYRQAEHF…CRRCKATLVF (149 aa)) folds into the SprT-like domain. His-69 provides a ligand contact to Zn(2+). The active site involves Glu-70. A Zn(2+)-binding site is contributed by His-73.

The protein belongs to the SprT family. Zn(2+) serves as cofactor.

The protein localises to the cytoplasm. This is Protein SprT from Pseudomonas aeruginosa (strain UCBPP-PA14).